Reading from the N-terminus, the 3902-residue chain is Mediator of RNA polymerase II transcription subunit 12 (3902 aa).

Disordered regions lie at residues 414–576 (ESLT…EELP), 619–674 (FEPF…NPKL), 694–940 (AFDP…LEAL), 977–1029 (VVEK…PEPP), 1812–1831 (TSHK…TETR), 2463–2675 (TVEP…NRKQ), 2719–2771 (AGAS…SSSM), 2876–3151 (RIME…PEMQ), 3195–3549 (LQAG…SSNQ), and 3563–3902 (AGLN…QQQY). A compositionally biased stretch (acidic residues) spans 420–430 (EPEEDPEEGPE). The span at 709–721 (PTPPEAPPPPPPV) shows a compositional bias: pro residues. Basic and acidic residues-rich tracts occupy residues 740–802 (EDGK…EHLN), 912–928 (KAGD…KKPD), 977–1004 (VVEK…EKLP), and 1018–1027 (KTPEKPKTPE). A compositionally biased stretch (basic residues) spans 1812-1824 (TSHKTKDVKRKSA). The required for nuclear localization stretch occupies residues 2409 to 3902 (QTTRLDKVAK…MGQFPNQQQY (1494 aa)). The span at 2474–2547 (AAVKKPEEET…VTAKDTEKDT (74 aa)) shows a compositional bias: basic and acidic residues. The stretch at 2480-2526 (EEETAEKKKDEAKKADEKTTKADDEKKKDETADAKKDNEKQKEEKDK) forms a coiled coil. Low complexity-rich tracts occupy residues 2548–2566 (AAPT…AAPD), 2614–2632 (SRAN…SSTT), and 2734–2748 (PHPG…QHQG). Positions 2876 to 2979 (RIMEEQRILR…ERLERERVAR (104 aa)) are enriched in basic and acidic residues. 4 stretches are compositionally biased toward low complexity: residues 2980-3001 (EALA…QAQQ), 3010-3143 (QQQR…QRNP), 3196-3205 (QAGQAAGQQQ), and 3226-3236 (PQQQQQQPQQP). A compositionally biased stretch (polar residues) spans 3237–3248 (GTSQIPNTTPTR). Composition is skewed to low complexity over residues 3250–3275 (ANPM…GQPG), 3284–3295 (GQQQQNQFQRQG), and 3317–3389 (GQQQ…FGRQ). A compositionally biased stretch (polar residues) spans 3391 to 3409 (APNQENFQQQPGFNQNAAG). 3 stretches are compositionally biased toward low complexity: residues 3410 to 3446 (QNYQ…QQQN), 3454 to 3539 (QSQQ…QGNQ), and 3570 to 3619 (SSGN…RPGM). Over residues 3620 to 3649 (GQQGMGQQGMGQQGGMGQSGRGQPGMGGQS) the composition is skewed to gly residues. Composition is skewed to low complexity over residues 3663 to 3700 (MGQP…QQQH), 3710 to 3742 (QQGR…QQAQ), and 3760 to 3830 (QQQQ…HRGQ). The span at 3831 to 3841 (GQQGHGMGGAG) shows a compositional bias: gly residues. Positions 3842-3888 (QQHQQVPQQQQNQYFQPQQQQDQRMQQQPGGQQQQQQGQSGQQQNNQ) are enriched in low complexity. Positions 3889 to 3902 (HYNNMGQFPNQQQY) are enriched in polar residues.

Belongs to the Mediator complex subunit 12 family. In terms of assembly, component of the Mediator complex.

The protein resides in the nucleus. In terms of biological role, component of the Mediator complex, a coactivator involved in regulated gene transcription of nearly all RNA polymerase II-dependent genes. Mediator functions as a bridge to convey information from gene-specific regulatory proteins to the basal RNA polymerase II transcription machinery. Mediator is recruited to promoters by direct interactions with regulatory proteins and serves as a scaffold for the assembly of a functional preinitiation complex with RNA polymerase II and the general transcription factors. This is Mediator of RNA polymerase II transcription subunit 12 (dpy-22) from Caenorhabditis briggsae.